A 201-amino-acid polypeptide reads, in one-letter code: NADH-quinone oxidoreductase subunit B 1 (201 aa).

Residues C80, C81, C145, and C175 each coordinate [4Fe-4S] cluster.

The protein belongs to the complex I 20 kDa subunit family. NDH-1 is composed of 14 different subunits. Subunits NuoB, C, D, E, F, and G constitute the peripheral sector of the complex. Requires [4Fe-4S] cluster as cofactor.

It localises to the cell inner membrane. The catalysed reaction is a quinone + NADH + 5 H(+)(in) = a quinol + NAD(+) + 4 H(+)(out). In terms of biological role, NDH-1 shuttles electrons from NADH, via FMN and iron-sulfur (Fe-S) centers, to quinones in the respiratory chain. The immediate electron acceptor for the enzyme in this species is believed to be ubiquinone. Couples the redox reaction to proton translocation (for every two electrons transferred, four hydrogen ions are translocated across the cytoplasmic membrane), and thus conserves the redox energy in a proton gradient. The polypeptide is NADH-quinone oxidoreductase subunit B 1 (Rhodopseudomonas palustris (strain BisB18)).